A 117-amino-acid polypeptide reads, in one-letter code: Ribonuclease P protein component (117 aa).

It belongs to the RnpA family. Consists of a catalytic RNA component (M1 or rnpB) and a protein subunit.

The enzyme catalyses Endonucleolytic cleavage of RNA, removing 5'-extranucleotides from tRNA precursor.. Functionally, RNaseP catalyzes the removal of the 5'-leader sequence from pre-tRNA to produce the mature 5'-terminus. It can also cleave other RNA substrates such as 4.5S RNA. The protein component plays an auxiliary but essential role in vivo by binding to the 5'-leader sequence and broadening the substrate specificity of the ribozyme. This chain is Ribonuclease P protein component, found in Limosilactobacillus reuteri subsp. reuteri (strain JCM 1112) (Lactobacillus reuteri).